The following is a 300-amino-acid chain: Nucleotide-binding protein Daci_5422 (300 aa).

ATP is bound at residue 10–17; the sequence is GMSGSGKS. 59-62 contacts GTP; it reads DARS.

It belongs to the RapZ-like family.

Its function is as follows. Displays ATPase and GTPase activities. The sequence is that of Nucleotide-binding protein Daci_5422 from Delftia acidovorans (strain DSM 14801 / SPH-1).